Here is a 326-residue protein sequence, read N- to C-terminus: Probable cell division protein WhiA (326 aa).

A DNA-binding region (H-T-H motif) is located at residues 275–308 (SLEELGQLADPPLTKDAIAGRIRRLLAMADKRAA).

This sequence belongs to the WhiA family.

In terms of biological role, involved in cell division and chromosome segregation. The sequence is that of Probable cell division protein WhiA from Thermobifida fusca (strain YX).